Reading from the N-terminus, the 450-residue chain is Paired box protein Pax-8 (450 aa).

Positions 9–135 (GHGGLNQLGG…SSINRIIRTK (127 aa)) form a DNA-binding region, paired. The tract at residues 12-68 (GLNQLGGAFVNGRPLPEVVRQRIVDLAHQGVRPCDISRQLRVSHGCVSKILGRYYET) is PAI subdomain. The segment at 87–135 (KVVEKIGDYKRQNPTMFAWEIRDRLLAEGVCDNDTVPSVSSINRIIRTK) is RED subdomain. A compositionally biased stretch (polar residues) spans 159–182 (LIPSSAVTPPESPQSDSLGSTYSI). Residues 159 to 222 (LIPSSAVTPP…QSSSSGPRKH (64 aa)) form a disordered region. Ser303 is modified (phosphoserine).

Interacts with WWTR1. Expressed in the excretory system, thyroid gland and Wilms tumors.

The protein resides in the nucleus. Transcription factor for the thyroid-specific expression of the genes exclusively expressed in the thyroid cell type, maintaining the functional differentiation of such cells. The chain is Paired box protein Pax-8 (PAX8) from Homo sapiens (Human).